The following is a 488-amino-acid chain: Probable apyrase 5 (488 aa).

Residues 1 to 26 are disordered; that stretch reads MDALKVQILPDNQSSPSSTHMLTKPK. At 1–32 the chain is on the cytoplasmic side; the sequence is MDALKVQILPDNQSSPSSTHMLTKPKSKKATK. Over residues 10-21 the composition is skewed to polar residues; that stretch reads PDNQSSPSSTHM. A helical; Signal-anchor for type II membrane protein transmembrane segment spans residues 33 to 53; it reads SIAMLIVASLAITLGLLFVFS. The Extracellular segment spans residues 54–488; the sequence is SNSVMFSASF…GKSRKMIGFK (435 aa). An ATP-binding site is contributed by 73–83; the sequence is VIIDAGSSGTR. The active-site Proton acceptor is the Glu196. 220–230 contributes to the ATP binding site; sequence GIVELGGASAQ. Residue Asn251 is glycosylated (N-linked (GlcNAc...) asparagine).

The protein belongs to the GDA1/CD39 NTPase family. The cofactor is Ca(2+). Highly expressed in young rosette leaves but only weakly in roots.

Its subcellular location is the membrane. It carries out the reaction a ribonucleoside 5'-triphosphate + 2 H2O = a ribonucleoside 5'-phosphate + 2 phosphate + 2 H(+). Functionally, catalyzes the hydrolysis of phosphoanhydride bonds of nucleoside tri- and di-phosphates. This Arabidopsis thaliana (Mouse-ear cress) protein is Probable apyrase 5 (APY5).